We begin with the raw amino-acid sequence, 353 residues long: UPF0283 membrane protein Spro_2618 (353 aa).

Helical transmembrane passes span 71–91 (MVTA…VQWV), 101–121 (IAMG…GSVV), and 214–234 (ESTL…FIAW).

It belongs to the UPF0283 family.

It is found in the cell inner membrane. The sequence is that of UPF0283 membrane protein Spro_2618 from Serratia proteamaculans (strain 568).